A 126-amino-acid chain; its full sequence is Large ribosomal subunit protein bL20c (126 aa).

The protein belongs to the bacterial ribosomal protein bL20 family.

The protein resides in the plastid. Its subcellular location is the chloroplast. Binds directly to 23S ribosomal RNA and is necessary for the in vitro assembly process of the 50S ribosomal subunit. It is not involved in the protein synthesizing functions of that subunit. The chain is Large ribosomal subunit protein bL20c from Guizotia abyssinica (Niger).